A 488-amino-acid chain; its full sequence is Cardiolipin synthase 2 (488 aa).

A run of 2 helical transmembrane segments spans residues 8–28 (IIIN…AFII) and 39–59 (IWAW…LYLL). 2 consecutive PLD phosphodiesterase domains span residues 223-250 (MNNR…GDEY) and 401-428 (DNGF…DNRS). Active-site residues include histidine 228, lysine 230, aspartate 235, histidine 406, lysine 408, and aspartate 413.

The protein belongs to the phospholipase D family. Cardiolipin synthase subfamily.

It localises to the cell membrane. It carries out the reaction 2 a 1,2-diacyl-sn-glycero-3-phospho-(1'-sn-glycerol) = a cardiolipin + glycerol. Catalyzes the reversible phosphatidyl group transfer from one phosphatidylglycerol molecule to another to form cardiolipin (CL) (diphosphatidylglycerol) and glycerol. The protein is Cardiolipin synthase 2 (cls2) of Staphylococcus epidermidis (strain ATCC 35984 / DSM 28319 / BCRC 17069 / CCUG 31568 / BM 3577 / RP62A).